Reading from the N-terminus, the 128-residue chain is Ribonuclease P protein component (128 aa).

Belongs to the RnpA family. Consists of a catalytic RNA component (M1 or rnpB) and a protein subunit.

The enzyme catalyses Endonucleolytic cleavage of RNA, removing 5'-extranucleotides from tRNA precursor.. In terms of biological role, RNaseP catalyzes the removal of the 5'-leader sequence from pre-tRNA to produce the mature 5'-terminus. It can also cleave other RNA substrates such as 4.5S RNA. The protein component plays an auxiliary but essential role in vivo by binding to the 5'-leader sequence and broadening the substrate specificity of the ribozyme. The polypeptide is Ribonuclease P protein component (Prochlorococcus marinus (strain MIT 9301)).